A 528-amino-acid polypeptide reads, in one-letter code: Drimenol cyclase drtB (528 aa).

The protein belongs to the HAD-like hydrolase superfamily.

It catalyses the reaction (2E,6E)-farnesyl diphosphate + H2O = (5S,9S,10S)-drim-7-en-11-ol + diphosphate. Its pathway is secondary metabolite biosynthesis; terpenoid biosynthesis. Its function is as follows. Drimenol cyclase; part of the gene cluster that mediates the biosynthesis of various drimane-type sesquiterpene esters, compounds that exhibit diverse biological activities and are widely present in eukaryotes. The pathway begins with the synthesis of the backbone drimenol by the terpene cyclase drtB using farnesyl pyrophosphate (FPP) as substrate. The cytochrome P450 monooxygenase drtD is then responsible for the hydroxylations at C-6, C-9 and C-12, as well as the oxidation of hydroxyl groups at C-6 and C-11 to a ketone and an aldehyde, respectively. Then, the biosynthesis can go in two directions, either the hydroxylated drimenol is further hydroxylated at C-2 and C-3 by an enzyme(s) not associated with the drt cluster, or the FAD-binding oxidoreductase drtC further oxidizes C-11 or C-12 to form the butyrolactone ring. DrtB, drtD and drtC are solely responsible for the formation of the different drimane structures observed during drimane sesquiterpenes biosynthesis. The polyketide synthase drtA synthesizes different lengths (C6 and C8) of PKS chains, which are then oxidized to varying degrees by the short-chain dehydrogenase drtF. Finally, these PKS chains are transferred onto drimane sesquiterpenes by the acyltransferase drtE, forming the sesquiterpene esters. In addition to the different fatty acyl-CoA chains produced by drtA, drtE is also able to use cinnamoyl-CoA as a substrate. The protein is Drimenol cyclase drtB of Aspergillus calidoustus.